A 634-amino-acid chain; its full sequence is Glutamyl-tRNA(Gln) amidotransferase subunit E (634 aa).

It belongs to the GatB/GatE family. GatE subfamily. As to quaternary structure, heterodimer of GatD and GatE.

The catalysed reaction is L-glutamyl-tRNA(Gln) + L-glutamine + ATP + H2O = L-glutaminyl-tRNA(Gln) + L-glutamate + ADP + phosphate + H(+). In terms of biological role, allows the formation of correctly charged Gln-tRNA(Gln) through the transamidation of misacylated Glu-tRNA(Gln) in organisms which lack glutaminyl-tRNA synthetase. The reaction takes place in the presence of glutamine and ATP through an activated gamma-phospho-Glu-tRNA(Gln). The GatDE system is specific for glutamate and does not act on aspartate. The protein is Glutamyl-tRNA(Gln) amidotransferase subunit E of Sulfolobus acidocaldarius (strain ATCC 33909 / DSM 639 / JCM 8929 / NBRC 15157 / NCIMB 11770).